The chain runs to 1077 residues: Ubiquitin carboxyl-terminal hydrolase 28 (1077 aa).

The segment at 60 to 80 is disordered; it reads DERVKEPSQDTVATEPSEVEG. Ser-67 is subject to Phosphoserine. A UIM domain is found at 97–116; it reads DNKDDLQAAIALSLLESPKI. Residue Lys-99 forms a Glycyl lysine isopeptide (Lys-Gly) (interchain with G-Cter in SUMO2) linkage. One can recognise a USP domain in the interval 162–650; that stretch reads VGLKNVGNTC…SAYCLMYIND (489 aa). The active-site Nucleophile is Cys-171. At Ser-375 the chain carries Phosphoserine. The disordered stretch occupies residues 477-535; the sequence is HCSVSDQTSKESTSTESSSQDVESTFSSPEDSLPKSKPLTSSRSSMEMPSQPAPRTVTD. A compositionally biased stretch (low complexity) spans 481-501; it reads SDQTSKESTSTESSSQDVEST. Positions 514–524 are enriched in polar residues; sequence PLTSSRSSMEM. The residue at position 550 (Ser-550) is a Phosphoserine. The active-site Proton acceptor is His-600. Residues 697 to 728 form a disordered region; the sequence is EEQSCKIPQMESSTNSSSQDYSTSQEPSVASS. The segment covering 707 to 724 has biased composition (low complexity); that stretch reads ESSTNSSSQDYSTSQEPS. At Ser-714 the chain carries Phosphoserine. Lys-759 is covalently cross-linked (Glycyl lysine isopeptide (Lys-Gly) (interchain with G-Cter in SUMO2)). Residue Thr-1048 is modified to Phosphothreonine.

The protein belongs to the peptidase C19 family. USP28 subfamily. Interacts with ZNF304. Interacts with PRKD1. Interacts with TP53BP1. Interacts with isoform 1 of FBXW7; following DNA damage, dissociates from FBXW7 leading to degradation of MYC. Degraded upon nickel ion level or hypoxia exposure. In terms of processing, phosphorylated upon DNA damage at Ser-67 and Ser-714, by ATM or ATR. Phosphorylated by PRKD1.

Its subcellular location is the nucleus. It is found in the nucleoplasm. The enzyme catalyses Thiol-dependent hydrolysis of ester, thioester, amide, peptide and isopeptide bonds formed by the C-terminal Gly of ubiquitin (a 76-residue protein attached to proteins as an intracellular targeting signal).. Its function is as follows. Deubiquitinase involved in DNA damage response checkpoint and MYC proto-oncogene stability. Involved in DNA damage induced apoptosis by specifically deubiquitinating proteins of the DNA damage pathway such as CLSPN. Also involved in G2 DNA damage checkpoint, by deubiquitinating CLSPN, and preventing its degradation by the anaphase promoting complex/cyclosome (APC/C). In contrast, it does not deubiquitinate PLK1. Specifically deubiquitinates MYC in the nucleoplasm, leading to prevent MYC degradation by the proteasome: acts by specifically interacting with isoform 1 of FBXW7 (FBW7alpha) in the nucleoplasm and counteracting ubiquitination of MYC by the SCF(FBW7) complex. In contrast, it does not interact with isoform 4 of FBXW7 (FBW7gamma) in the nucleolus, allowing MYC degradation and explaining the selective MYC degradation in the nucleolus. Deubiquitinates ZNF304, hence preventing ZNF304 degradation by the proteasome and leading to the activated KRAS-mediated promoter hypermethylation and transcriptional silencing of tumor suppressor genes (TSGs) in a subset of colorectal cancers (CRC) cells. This is Ubiquitin carboxyl-terminal hydrolase 28 (USP28) from Homo sapiens (Human).